Here is a 352-residue protein sequence, read N- to C-terminus: Phenylalanine--tRNA ligase alpha subunit (352 aa).

Glu258 contacts Mg(2+).

Belongs to the class-II aminoacyl-tRNA synthetase family. Phe-tRNA synthetase alpha subunit type 1 subfamily. In terms of assembly, tetramer of two alpha and two beta subunits. Mg(2+) is required as a cofactor.

It localises to the cytoplasm. The enzyme catalyses tRNA(Phe) + L-phenylalanine + ATP = L-phenylalanyl-tRNA(Phe) + AMP + diphosphate + H(+). This is Phenylalanine--tRNA ligase alpha subunit from Staphylococcus saprophyticus subsp. saprophyticus (strain ATCC 15305 / DSM 20229 / NCIMB 8711 / NCTC 7292 / S-41).